Here is a 299-residue protein sequence, read N- to C-terminus: Non-homologous end-joining factor 1 (299 aa).

The tract at residues 1–135 (MEELEQGLLM…ASPSLVSQHL (135 aa)) is globular head. A coiled-coil region spans residues 128–170 (PSLVSQHLIRPLMGMSLALQCQVRELATLLHMKDLEIQDYQES). A phosphoserine; by PRKDC mark is found at Ser132, Ser203, Ser245, and Ser251. Positions 224 to 288 (QEVQVGQKHQ…GPLQRPQLSK (65 aa)) are C-terminal tail. A compositionally biased stretch (polar residues) spans 255–266 (NQPEQLVSSAPT). The interval 255-299 (NQPEQLVSSAPTLSAPEKESTGTSGPLQRPQLSKVKRKKPRGLFS) is disordered. Phosphoserine is present on Ser263. Thr266 carries the post-translational modification Phosphothreonine. Ser287 is subject to Phosphoserine. Over residues 288 to 299 (KVKRKKPRGLFS) the composition is skewed to basic residues. Residues 289-299 (VKRKKPRGLFS) carry the XLM motif.

It belongs to the XRCC4-XLF family. XLF subfamily. In terms of assembly, homodimer; mainly exists as a homodimer when not associated with XRCC4. Interacts with XRCC4; the interaction is direct and is mediated via a head-to-head interaction between N-terminal head regions. Component of the core long-range non-homologous end joining (NHEJ) complex (also named DNA-PK complex) composed of PRKDC, LIG4, XRCC4, XRCC6/Ku70, XRCC5/Ku86 and NHEJ1/XLF. Additional component of the NHEJ complex includes PAXX. Following autophosphorylation, PRKDC dissociates from DNA, leading to formation of the short-range NHEJ complex, composed of LIG4, XRCC4, XRCC6/Ku70, XRCC5/Ku86 and NHEJ1/XLF. Interacts with POLL (DNA polymerase lambda); promoting POLL recruitment to double-strand breaks (DSBs) and stimulation of the end-filling activity of POLL. In terms of processing, phosphorylated by PRKDC at the C-terminus in response to DNA damage. Phosphorylations by PRKDC at the C-terminus of XRCC4 and NHEJ1/XLF are highly redundant and regulate ability of the XRCC4-NHEJ1/XLF subcomplex to bridge DNA. Phosphorylation does not prevent interaction with XRCC4 but disrupts ability to bridge DNA and promotes detachment from DNA. In terms of tissue distribution, ubiquitously expressed.

It is found in the nucleus. It localises to the chromosome. In terms of biological role, DNA repair protein involved in DNA non-homologous end joining (NHEJ); it is required for double-strand break (DSB) repair and V(D)J recombination and is also involved in telomere maintenance. Plays a key role in NHEJ by promoting the ligation of various mismatched and non-cohesive ends. Together with PAXX, collaborates with DNA polymerase lambda (POLL) to promote joining of non-cohesive DNA ends. May act in concert with XRCC5-XRCC6 (Ku) to stimulate XRCC4-mediated joining of blunt ends and several types of mismatched ends that are non-complementary or partially complementary. In some studies, has been shown to associate with XRCC4 to form alternating helical filaments that bridge DNA and act like a bandage, holding together the broken DNA until it is repaired. Alternatively, it has also been shown that rather than forming filaments, a single NHEJ1 dimer interacts through both head domains with XRCC4 to promote the close alignment of DNA ends. The XRCC4-NHEJ1/XLF subcomplex binds to the DNA fragments of a DSB in a highly diffusive manner and robustly bridges two independent DNA molecules, holding the broken DNA fragments in close proximity to one other. The mobility of the bridges ensures that the ends remain accessible for further processing by other repair factors. Binds DNA in a length-dependent manner. The protein is Non-homologous end-joining factor 1 of Homo sapiens (Human).